Here is a 159-residue protein sequence, read N- to C-terminus: uncharacterized protein (159 aa).

This sequence belongs to the mimivirus L761/L899 family.

This is an uncharacterized protein from Acanthamoeba polyphaga mimivirus (APMV).